The sequence spans 105 residues: MSWIVLLIAGLLEVVWAIGLKYTHGFTRLTPSIITIAAMIVSIAMLSWAMRTLPVGTAYAVWTGIGAVGAAITGILLLGESASPARLLSLGLIVAGIIGLKLSTH.

Residue methionine 1 is a topological domain, cytoplasmic. The chain crosses the membrane as a helical span at residues 2–19 (SWIVLLIAGLLEVVWAIG). Topologically, residues 20–28 (LKYTHGFTR) are periplasmic. Residues 29 to 48 (LTPSIITIAAMIVSIAMLSW) traverse the membrane as a helical segment. The Cytoplasmic segment spans residues 49–54 (AMRTLP). A helical transmembrane segment spans residues 55–77 (VGTAYAVWTGIGAVGAAITGILL). Topologically, residues 78-86 (LGESASPAR) are periplasmic. Residues 87-104 (LLSLGLIVAGIIGLKLST) traverse the membrane as a helical segment. A topological domain (cytoplasmic) is located at residue histidine 105.

It belongs to the drug/metabolite transporter (DMT) superfamily. Small multidrug resistance (SMR) (TC 2.A.7.1) family. Gdx/SugE subfamily.

It is found in the cell inner membrane. Guanidinium ion exporter. Couples guanidinium export to the proton motive force, exchanging one guanidinium ion for two protons. This Citrobacter freundii protein is Guanidinium exporter.